A 246-amino-acid polypeptide reads, in one-letter code: Exosome complex component Rrp41 (246 aa).

Belongs to the RNase PH family. Rrp41 subfamily. As to quaternary structure, component of the archaeal exosome complex. Forms a hexameric ring-like arrangement composed of 3 Rrp41-Rrp42 heterodimers. The hexameric ring associates with a trimer of Rrp4 and/or Csl4 subunits.

It is found in the cytoplasm. Catalytic component of the exosome, which is a complex involved in RNA degradation. Has 3'-&gt;5' exoribonuclease activity. Can also synthesize heteromeric RNA-tails. The protein is Exosome complex component Rrp41 of Pyrobaculum islandicum (strain DSM 4184 / JCM 9189 / GEO3).